The following is a 466-amino-acid chain: Probable aminotransferase Rv3329 (466 aa).

Residue K294 is modified to N6-(pyridoxal phosphate)lysine.

The protein belongs to the class-III pyridoxal-phosphate-dependent aminotransferase family. Pyridoxal 5'-phosphate is required as a cofactor.

Functionally, probable aminotransferase. This Mycobacterium tuberculosis (strain ATCC 25618 / H37Rv) protein is Probable aminotransferase Rv3329.